We begin with the raw amino-acid sequence, 224 residues long: Thiamine-phosphate synthase (224 aa).

Residues 44–48 (QFREK) and asparagine 79 each bind 4-amino-2-methyl-5-(diphosphooxymethyl)pyrimidine. 2 residues coordinate Mg(2+): aspartate 80 and aspartate 99. Serine 117 is a 4-amino-2-methyl-5-(diphosphooxymethyl)pyrimidine binding site. 143–145 (TET) contributes to the 2-[(2R,5Z)-2-carboxy-4-methylthiazol-5(2H)-ylidene]ethyl phosphate binding site. Lysine 146 serves as a coordination point for 4-amino-2-methyl-5-(diphosphooxymethyl)pyrimidine. Residues glycine 175 and 195–196 (IS) contribute to the 2-[(2R,5Z)-2-carboxy-4-methylthiazol-5(2H)-ylidene]ethyl phosphate site.

It belongs to the thiamine-phosphate synthase family. Mg(2+) serves as cofactor.

It carries out the reaction 2-[(2R,5Z)-2-carboxy-4-methylthiazol-5(2H)-ylidene]ethyl phosphate + 4-amino-2-methyl-5-(diphosphooxymethyl)pyrimidine + 2 H(+) = thiamine phosphate + CO2 + diphosphate. The catalysed reaction is 2-(2-carboxy-4-methylthiazol-5-yl)ethyl phosphate + 4-amino-2-methyl-5-(diphosphooxymethyl)pyrimidine + 2 H(+) = thiamine phosphate + CO2 + diphosphate. It catalyses the reaction 4-methyl-5-(2-phosphooxyethyl)-thiazole + 4-amino-2-methyl-5-(diphosphooxymethyl)pyrimidine + H(+) = thiamine phosphate + diphosphate. The protein operates within cofactor biosynthesis; thiamine diphosphate biosynthesis; thiamine phosphate from 4-amino-2-methyl-5-diphosphomethylpyrimidine and 4-methyl-5-(2-phosphoethyl)-thiazole: step 1/1. Its function is as follows. Condenses 4-methyl-5-(beta-hydroxyethyl)thiazole monophosphate (THZ-P) and 2-methyl-4-amino-5-hydroxymethyl pyrimidine pyrophosphate (HMP-PP) to form thiamine monophosphate (TMP). The chain is Thiamine-phosphate synthase from Bacillus velezensis (strain DSM 23117 / BGSC 10A6 / LMG 26770 / FZB42) (Bacillus amyloliquefaciens subsp. plantarum).